A 574-amino-acid polypeptide reads, in one-letter code: Cytochrome P450 4g15 (574 aa).

Positions 288 to 327 (REREQNGGVDQTPSTAGSDEKDREKDKEKASPVAGLSYGQ) are disordered. Residues 295–304 (GVDQTPSTAG) show a composition bias toward polar residues. The segment covering 305 to 317 (SDEKDREKDKEKA) has biased composition (basic and acidic residues). The heme site is built by E379 and C519.

The protein belongs to the cytochrome P450 family. It depends on heme as a cofactor. As to expression, expressed in larval brain cortex cells and ring glands and weakly in larval digestive system and adult nervous system.

It localises to the endoplasmic reticulum membrane. The protein resides in the microsome membrane. Functionally, probably involved in steroid hormones biosynthesis. This is Cytochrome P450 4g15 (Cyp4g15) from Drosophila melanogaster (Fruit fly).